Reading from the N-terminus, the 169-residue chain is Podoplanin (169 aa).

An N-terminal signal peptide occupies residues 1 to 22; the sequence is MWRVPVLLLVLGGAGLRVPAAG. Residues 23-138 are Extracellular-facing; sequence ASTVRPDDII…EKDGLATVTL (116 aa). An O-linked (GalNAc...) threonine glycan is attached at T25. A disordered region spans residues 37–69; it reads DSVVTPGTEDSVVTPGAEDNVVTDGATEEPYES. S38 is a glycosylation site (O-linked (GalNAc...) serine). O-linked (GalNAc...) threonine glycosylation is found at T41 and T44. An O-linked (GalNAc...) serine glycan is attached at S47. O-linked (GalNAc...) threonine glycosylation is found at T50, T59, T63, T72, T76, T79, T83, T92, T96, T106, T107, T108, T113, T126, and T127. Residues 139–159 form a helical membrane-spanning segment; the sequence is VGIIVGVLLAIGFIGGIIIVV. The requires for dimerization and lipid rafts association stretch occupies residues 140 to 144; the sequence is GIIVG. Topologically, residues 160-169 are cytoplasmic; that stretch reads ARKMSGRYSP. Residues 161–162 are requires for interaction with MSN and EZR; sequence RK.

Belongs to the podoplanin family. Homodimer. Interacts with CLEC1B; the interaction is independent of CLEC1B glycosylation and activates CLEC1B; the interaction is dependent of sialic acid on O-glycans. Interacts with CD9; this interaction is homophilic and attenuates platelet aggregation and pulmonary metastasis induced by PDPN. Interacts with LGALS8; the interaction is glycosylation-dependent; may participate in connection of the lymphatic endothelium to the surrounding extracellular matrix. Interacts with HSPA9. Interacts (via extracellular domain) with CD44; this interaction is required for PDPN-mediated directional migration and regulation of lamellipodia extension/stabilization during cell spreading and migration. Interacts (via cytoplasmic domain) with MSN and EZR; activates RHOA and promotes epithelial-mesenchymal transition. Interacts with CCL21; relocalized PDPN to the basolateral membrane. Post-translationally, extensively O-glycosylated. Contains sialic acid residues. O-glycosylation is necessary for platelet aggregation activity. Disialylated at Thr-59; sialic acid is critical for platelet-aggregating activity and for CLEC1B interaction. The N-terminus is blocked.

The protein localises to the membrane. The protein resides in the cell projection. Its subcellular location is the filopodium membrane. It localises to the lamellipodium membrane. It is found in the microvillus membrane. The protein localises to the ruffle membrane. The protein resides in the membrane raft. Its subcellular location is the apical cell membrane. It localises to the basolateral cell membrane. It is found in the invadopodium. Functionally, mediates effects on cell migration and adhesion through its different partners. During development plays a role in blood and lymphatic vessels separation by binding CLEC1B, triggering CLEC1B activation in platelets and leading to platelet activation and/or aggregation. Interaction with CD9, on the contrary, attenuates platelet aggregation and pulmonary metastasis induced by PDPN. Mediates effects on cell migration and adhesion through its different partners. Through MSN or EZR interaction promotes epithelial-mesenchymal transition (EMT) leading to ERZ phosphorylation and triggering RHOA activation leading to cell migration increase and invasiveness. Interaction with CD44 promotes directional cell migration in epithelial and tumor cells. In lymph nodes (LNs), controls fibroblastic reticular cells (FRCs) adhesion to the extracellular matrix (ECM) and contraction of the actomyosin by maintaining ERM proteins (EZR; MSN and RDX) and MYL9 activation through association with unknown transmembrane proteins. Engagement of CLEC1B by PDPN promotes FRCs relaxation by blocking lateral membrane interactions leading to reduction of ERM proteins (EZR; MSN and RDX) and MYL9 activation. Through binding with LGALS8 may participate in connection of the lymphatic endothelium to the surrounding extracellular matrix. In keratinocytes, induces changes in cell morphology showing an elongated shape, numerous membrane protrusions, major reorganization of the actin cytoskeleton, increased motility and decreased cell adhesion. Controls invadopodia stability and maturation leading to efficient degradation of the extracellular matrix (ECM) in tumor cells through modulation of RHOC activity in order to activate ROCK1/ROCK2 and LIMK1/LIMK2 and inactivation of CFL1. Required for normal lung cell proliferation and alveolus formation at birth. Does not function as a water channel or as a regulator of aquaporin-type water channels. Does not have any effect on folic acid or amino acid transport. The chain is Podoplanin (PDPN) from Canis lupus familiaris (Dog).